The primary structure comprises 848 residues: MLKIIEKLIGSYSEREIKKILPIVDKIESLAPEYERLTDAELRQKTDIFKERLKNGETLDDILPEAFAAVREAAWRTLKMRHFRVQLIGGIVLHQGRIAEMKTGEGKTLVATLPAYLNALEGKGVHIVTVNDYLAKRDAEWMGPIYNFLGLSVGVIVHGLTSEERRKAYNCDVTYGTNNEFGFDYLRDNMAIYKEELVQRELNYAIIDEVDSILIDEARTPLIISGPAEKSTDLYKRADNFVRRLKPLYYNSDDDKQMPDTTGYDYIVNEKRHTVALTEEGIKKAEKYFGVTNLADPENATLHHHIIQALKAHALMKRDRDYVVKDGQVIIVDEFTGRLMYGRRFSEGLHQAIEAKEGVRIERESRTLATITFQNYFRLYKKLAGMTGTAKTEEQEFREIYKLDVIEIPTHKPMIRIDHPDKVYKTEKAKFEAIVEEIVETHKKGQPVLVGTVSIEKSEMLSEMLKKRGIKHEVLNAKHHEKEAMIIAKAGQKGAVTIATNMAGRGTDIVLGEGVAELGGLKVIGTERHESRRIDNQLRGRAGRQGDPGESRFYVSLEDDLMRLFGSERIKRLVESLGLPDDQPIEHKLLSDAIEKAQKRVEARNFEIRKHLLQFDDVLNKQREIIYSQRRKVLEGENLRDSILNMIDELVDYKIKVYTGESPHPDDWDIKGLLQDLKFIFLDGELSEQDARNMTKDELKEKLISIAKEKYLKKEQEVGELMRELERVVLLRVVDMHWMDHIDAVDQLREGISLRAIGQKDPIVEFRFEAFEMFDQMIKRIQEDTIKIILHANVENMPKRERVVKEMYENSPSDAPVRKSVVKTQKVGRNDPCPCGSGKKYKKCCGAV.

Residues glutamine 86, 104 to 108 (GEGKT), and aspartate 508 each bind ATP. Zn(2+) contacts are provided by cysteine 833, cysteine 835, cysteine 844, and cysteine 845.

This sequence belongs to the SecA family. In terms of assembly, monomer and homodimer. Part of the essential Sec protein translocation apparatus which comprises SecA, SecYEG and auxiliary proteins SecDF. Other proteins may also be involved. Zn(2+) serves as cofactor.

The protein resides in the cell membrane. It is found in the cytoplasm. The enzyme catalyses ATP + H2O + cellular proteinSide 1 = ADP + phosphate + cellular proteinSide 2.. Part of the Sec protein translocase complex. Interacts with the SecYEG preprotein conducting channel. Has a central role in coupling the hydrolysis of ATP to the transfer of proteins into and across the cell membrane, serving as an ATP-driven molecular motor driving the stepwise translocation of polypeptide chains across the membrane. This is Protein translocase subunit SecA from Caldicellulosiruptor saccharolyticus (strain ATCC 43494 / DSM 8903 / Tp8T 6331).